The following is a 106-amino-acid chain: Small ribosomal subunit protein uS10 (106 aa).

The protein belongs to the universal ribosomal protein uS10 family. As to quaternary structure, part of the 30S ribosomal subunit.

Its function is as follows. Involved in the binding of tRNA to the ribosomes. The chain is Small ribosomal subunit protein uS10 from Synechococcus sp. (strain WH7803).